The chain runs to 258 residues: Beta carbonic anhydrase 3 (258 aa).

The first 28 residues, 1 to 28, serve as a signal peptide directing secretion; sequence MSTESYEDAIKRLGELLSKKSDLGNVAA. The stretch at 24-54 forms a coiled coil; the sequence is GNVAAAKIKKLTDELEELDSNKLDAVERIKS. The residue at position 35 (threonine 35) is a Phosphothreonine. The residue at position 95 (serine 95) is a Phosphoserine. Position 201 is an S-nitrosocysteine (cysteine 201).

This sequence belongs to the beta-class carbonic anhydrase family. As to expression, strongly expressed in aerial tissues including leaves, stems, flowers and siliques, and, to a lower extent, in roots.

It localises to the cytoplasm. It is found in the cytosol. It carries out the reaction hydrogencarbonate + H(+) = CO2 + H2O. Reversible hydration of carbon dioxide. The protein is Beta carbonic anhydrase 3 (BCA3) of Arabidopsis thaliana (Mouse-ear cress).